We begin with the raw amino-acid sequence, 74 residues long: Protein kish-B (74 aa).

A signal peptide spans 1-22 (MTNVYSLDGILVFGLLFVCTCA). Residues 23–52 (YFKKVPRLKTWLLSEKKGVWGVFYKAAVIG) are Extracellular-facing. Residues 53-73 (TRLHAAVAIACIVMAFYVLFI) traverse the membrane as a helical segment. Residue lysine 74 is a topological domain, cytoplasmic.

Belongs to the KISH family.

The protein localises to the golgi apparatus membrane. Its function is as follows. Involved in the early part of the secretory pathway. The polypeptide is Protein kish-B (TMEM167B) (Bos taurus (Bovine)).